The sequence spans 270 residues: 3-phenylpropionate-dihydrodiol/cinnamic acid-dihydrodiol dehydrogenase (270 aa).

Residue 10–34 (FITGGGSGLGLALVERFIEEGAQVA) coordinates NAD(+). Ser143 contacts substrate. Catalysis depends on Tyr156, which acts as the Proton acceptor.

The protein belongs to the short-chain dehydrogenases/reductases (SDR) family.

The enzyme catalyses 3-(cis-5,6-dihydroxycyclohexa-1,3-dien-1-yl)propanoate + NAD(+) = 3-(2,3-dihydroxyphenyl)propanoate + NADH + H(+). The catalysed reaction is (2E)-3-(cis-5,6-dihydroxycyclohexa-1,3-dien-1-yl)prop-2-enoate + NAD(+) = (2E)-3-(2,3-dihydroxyphenyl)prop-2-enoate + NADH + H(+). Its pathway is aromatic compound metabolism; 3-phenylpropanoate degradation. Its function is as follows. Converts 3-phenylpropionate-dihydrodiol (PP-dihydrodiol) and cinnamic acid-dihydrodiol (CI-dihydrodiol) into 3-(2,3-dihydroxylphenyl)propanoic acid (DHPP) and 2,3-dihydroxicinnamic acid (DHCI), respectively. This chain is 3-phenylpropionate-dihydrodiol/cinnamic acid-dihydrodiol dehydrogenase, found in Escherichia coli O157:H7.